The following is an 89-amino-acid chain: Inner kinetochore subunit mhf2 (89 aa).

This sequence belongs to the CENP-X/MHF2 family. The MHF histone-fold complex is a heterotetramer of 2 mhf1-mhf2 heterodimers. Component of the inner kinetochore constitutive centromere-associated network (CCAN) (also known as central kinetochore Sim4 complex in fission yeast), which is composed of at least cnl2, cnp3, cnp20, fta1, fta2, fta3, fta4, fta6, fta7, mal2, mhf1, mhf2, mis6, mis15, mis17, sim4 and wip1.

The protein localises to the nucleus. It is found in the cytoplasm. Its function is as follows. Component of a FANCM-MHF complex that promotes gene conversion at blocked replication forks, probably by reversal of the stalled fork. FANCM-MHF promotes non-crossover recombination. The chain is Inner kinetochore subunit mhf2 from Schizosaccharomyces pombe (strain 972 / ATCC 24843) (Fission yeast).